The sequence spans 476 residues: Aspartyl/glutamyl-tRNA(Asn/Gln) amidotransferase subunit B (476 aa).

Belongs to the GatB/GatE family. GatB subfamily. As to quaternary structure, heterotrimer of A, B and C subunits.

The catalysed reaction is L-glutamyl-tRNA(Gln) + L-glutamine + ATP + H2O = L-glutaminyl-tRNA(Gln) + L-glutamate + ADP + phosphate + H(+). The enzyme catalyses L-aspartyl-tRNA(Asn) + L-glutamine + ATP + H2O = L-asparaginyl-tRNA(Asn) + L-glutamate + ADP + phosphate + 2 H(+). Functionally, allows the formation of correctly charged Asn-tRNA(Asn) or Gln-tRNA(Gln) through the transamidation of misacylated Asp-tRNA(Asn) or Glu-tRNA(Gln) in organisms which lack either or both of asparaginyl-tRNA or glutaminyl-tRNA synthetases. The reaction takes place in the presence of glutamine and ATP through an activated phospho-Asp-tRNA(Asn) or phospho-Glu-tRNA(Gln). The sequence is that of Aspartyl/glutamyl-tRNA(Asn/Gln) amidotransferase subunit B from Latilactobacillus sakei subsp. sakei (strain 23K) (Lactobacillus sakei subsp. sakei).